Consider the following 2116-residue polypeptide: MEKLLDEVLAPGGPYNLTVGSWVRDHVRSIVEGAWEVRDVVTAAQKRAIVAVIPRPVFTQMQVSDHPALHAISRYTRRHWIEWGPKEALHVLIDPSPGLLREVARVERRWVALCLHRTARKLATALAETASEAWHADYVCALRGAPSGPFYVHPEDVPHGGRAVADRCLLYYTPMQMCELMRTIDATLLVAVDLWPVALAAHVGDDWDDLGIAWHLDHDGGCPADCRGAGAGPTPGYTRPCTTRIYQVLPDTAHPGRLYRCGPRLWTRDCAVAELSWEVAQHCGHQARVRAVRCTLPIRHVRSLQPSARVRLPDLVHLAEVGRWRWFSLPRPVFQRMLSYCKTLSPDAYYSERVFKFKNALCHSITLAGNVLQEGWKGTCAEEDALCAYVAFRAWQSNARLAGIMKGAKRCAADSLSVAGWLDTIWDAIKRFLGSVPLAERMEEWEQDAAVAAFDRGPLEDGGRHLDTVQPPKSPPRPEIAATWIVHAASEDRHCACAPRCDVPRERPSAPAGQPDDEALIPPWLFAERRALRCREWDFEALRARADTAAAPAPPAPRPARYPTVLYRHPAHHGPWLTLDEPGEADAALVLCDPLGQPLRGPERHFAAGAHMCAQARGLQAFVRVVPPPERPWADGGARAWAKFFRGCAWAQRLLGEPAVMHLPYTDGDVPQLIALALRTLAQQGAALALSVRDLPGGAAFDANAVTAAVRAGPRQSAAASPPPGDPPPPRRARRSQRHSDARGTPPPAPARDPPPPAPSPPAPPRAGDPVPPIPAGPADRARDAELEVACEPSGPPTSTRADPDSDIVESYARAAGPVHLRVRDIMDPPPGCKVVVNAANEGLLAGSGVCGAIFANATAALAANCRRLAPCPTGEAVATPGHGCGYTHIIHAVAPRRPRDPAALEEGEALLERAYRSIVALAAARRWACVACPLLGAGVYGWSAAESLRAALAATRTEPVERVSLHICHPDRATLTHASVLVGAGLAARRVSPPPTEPLASCPAGDPGRPAQRSASPPATPLGDATAPEPRGCQGCELCRYTRVTNDRAYVNLWLERDRGATSWAMRIPEVVVYGPEHLATHFPLNHYSVLKPAEVRPPRGMCGSDMWRCRGWHGMPQVRCTPSNAHAALCRTGVPPRASTRGGELDPNTCWLRAAANVAQAARACGAYTSAGCPKCAYGRALSEARTHEDFAALSQRWSASHADASPDGTGDPLDPLMETVGCACSRVWVGSEHEAPPDHLLVSLHRAPNGPWGVVLEVRARPEGGNPTGHFVCAVGGGPRRVSDRPHLWLAVPLSRGGGTCAATDEGLAQAYYDDLEVRRLGDDAMARAALASVQRPRKGPYNIRVWNMAAGAGKTTRILAAFTREDLYVCPTNALLHEIQAKLRARDIDIKNAATYERRLTKPLAAYRRIYIDEAFTLGGEYCAFVASQTTAEVICVGDRDQCGPHYANNCRTPVPDRWPTERSRHTWRFPDCWAARLRAGLDYDIEGERTGTFACNLWDGRQVDLHLAFSRETVRRLHEAGIRAYTVREAQGMSVGTACIHVGRDGTDVALALTRDLAIVSLTRASDALYLHELEDGSLRAAGLSAFLDAGALAELKEVPAGIDRVVAVEQAPPPLPPADGIPEAQDVPPFCPRTLEELVFGRAGHPHYADLNRVTEGEREVRYMRISRHLLNKNHTEMPGTERVLSAVCAVRRYRAGEDGSTLRTAVARQHPRPFRQIPPPRVTAGVAQEWRMTYLRERIDLTDVYTQMGVAARELTDRYARRYPEIFAGMCTAQSLSVPAFLKATLKCVDAALGPRDTEDCHAAQGKAGLEIRAWAKEWVQVMSPHFRAIQKIIMRALRPQFLVAAGHTEPEVDAWWQAHYTTNAIEVDFTEFDMNQTLATRDVELEISAALLGLPCAEDYRALRAGSYCTLRELGSTETGCERTSGEPATLLHNTTVAMCMAMRMVPKGVRWAGIFQGDDMVIFLPEGARSAALKWTPAEVGLFGFHIPVKHVSTPTPSFCGHVGTAAGLFHDVMHQAIKVLCRRFDPDVLEEQQVALLDRLRGVYAALPDTVAANAAYYDYSAERVLAIVRELTAYARGRGLDHPATIGALEEIQTPYARANLHDAD.

A required for efficient proteolysis and P150-P90 interaction region spans residues 36-49; sequence EVRDVVTAAQKRAI. The Alphavirus-like MT domain maps to 57 to 247; that stretch reads VFTQMQVSDH…TRPCTTRIYQ (191 aa). Basic and acidic residues predominate over residues 457–467; that stretch reads GPLEDGGRHLD. Disordered stretches follow at residues 457–477 and 712–805; these read GPLE…SPPR and AGPR…ADPD. 2 stretches are compositionally biased toward pro residues: residues 721-730 and 745-776; these read SPPPGDPPPP and TPPP…PIPA. 3 short sequence motifs (pxxPxR; class II SH3-binding) span residues 727-732, 747-752, and 761-766; these read PPPPRR, PPAPAR, and PPAPPR. The 180-residue stretch at 806-985 folds into the Macro domain; the sequence is SDIVESYARA…LTHASVLVGA (180 aa). Positions 992–1031 are disordered; the sequence is VSPPPTEPLASCPAGDPGRPAQRSASPPATPLGDATAPEP. A Peptidase C27 domain is found at 1000-1301; that stretch reads LASCPAGDPG…WLAVPLSRGG (302 aa). Cys-1152 (for cysteine protease activity) is an active-site residue. Residues 1152–1183 are interaction with host CALM1; that stretch reads CWLRAAANVAQAARACGAYTSAGCPKCAYGRA. 4 residues coordinate Zn(2+): Cys-1175, Cys-1178, Cys-1227, and His-1273. Residues 1193–1228 form an EF-hand-like region; it reads FAALSQRWSASHADASPDGTGDPLDPLMETVGCACS. His-1273 acts as the For cysteine protease activity in catalysis. Positions 1320 to 1468 constitute a (+)RNA virus helicase ATP-binding domain; that stretch reads EVRRLGDDAM…VPDRWPTERS (149 aa). 1352–1359 lines the a ribonucleoside 5'-triphosphate pocket; sequence MAAGAGKT. The region spanning 1469-1609 is the (+)RNA virus helicase C-terminal domain; the sequence is RHTWRFPDCW…ELKEVPAGID (141 aa). Positions 1700-1900 are involved in P150-P90 interaction; that stretch reads YRAGEDGSTL…VELEISAALL (201 aa). A RdRp catalytic domain is found at 1870 to 1981; it reads TNAIEVDFTE…FLPEGARSAA (112 aa). The Human RB1 binding motif lies at 1902-1906; that stretch reads LPCAE.

Interacts with RNA-directed RNA polymerase p90. Interacts with host CALM1; this interaction is necessary for the protease activity and viral infectivity. Interacts with host C1QBP. Interacts with the capsid protein. As to quaternary structure, interacts with human RB1/retinoblastoma protein. Interacts with protease/methyltransferase p150. Zn(2+) serves as cofactor. Specific enzymatic cleavage by its own cysteine protease yield mature proteins p150 and p90.

It is found in the host membrane. Its subcellular location is the host cytoplasm. The protein localises to the host perinuclear region. The enzyme catalyses RNA(n) + a ribonucleoside 5'-triphosphate = RNA(n+1) + diphosphate. It catalyses the reaction a ribonucleoside 5'-triphosphate + H2O = a ribonucleoside 5'-diphosphate + phosphate + H(+). It carries out the reaction ATP + H2O = ADP + phosphate + H(+). Probable principal replicase for the negative-strand DNA, which replicates the 40S (+) genomic RNA into (-) antigenomic RNA. It cannot replicate the (-) into (+) until cleaved into p150 and p90 mature proteins. Its function is as follows. Protease that cleaves the precursor polyprotein into two mature products. Together with RNA-directed RNA polymerase p90, replicates the 40S genomic and antigenomic RNA by recognizing replications specific signals. The heterodimer P150/p90 is probably the principal replicase for positive-strand genomic RNA and the 24S subgenomic RNA, which codes for structural proteins. Responsible for the mRNA-capping of the viral mRNAs. This function is necessary since all viral RNAs are synthesized in the cytoplasm, and host capping enzymes are restricted to the nucleus. Forms fibers late in the infection that may be involved in cell-to-cell spread of the virus RNA in the absence of virus particle formation. In terms of biological role, together with protease/methyltransferase p150, replicates the 40S genomic and antigenomic RNA by recognizing replications specific signals. The heterodimer P150/p90 is probably the principal replicase for positive-strand genomic RNA and the 24S subgenomic RNA, which codes for structural proteins. A helicase activity is probably also present. This is Non-structural polyprotein p200 from Rubella virus (strain Therien) (RUBV).